A 372-amino-acid polypeptide reads, in one-letter code: tRNA-specific 2-thiouridylase MnmA (372 aa).

ATP is bound by residues 11–18 (GMSGGVDS) and Met-37. The interval 97–99 (NPD) is interaction with target base in tRNA. Catalysis depends on Cys-102, which acts as the Nucleophile. The cysteines at positions 102 and 199 are disulfide-linked. Gly-126 is a binding site for ATP. The interval 149 to 151 (KDQ) is interaction with tRNA. Cys-199 acts as the Cysteine persulfide intermediate in catalysis. Residues 309–310 (RY) form an interaction with tRNA region.

Belongs to the MnmA/TRMU family.

The protein resides in the cytoplasm. The enzyme catalyses S-sulfanyl-L-cysteinyl-[protein] + uridine(34) in tRNA + AH2 + ATP = 2-thiouridine(34) in tRNA + L-cysteinyl-[protein] + A + AMP + diphosphate + H(+). In terms of biological role, catalyzes the 2-thiolation of uridine at the wobble position (U34) of tRNA, leading to the formation of s(2)U34. The sequence is that of tRNA-specific 2-thiouridylase MnmA from Staphylococcus aureus (strain MSSA476).